Here is a 437-residue protein sequence, read N- to C-terminus: GTPase Obg (437 aa).

Residues 2–160 form the Obg domain; the sequence is SMFLDTAKIK…RNLELELKVL (159 aa). The region spanning 161–338 is the OBG-type G domain; it reads ADVGLVGFPS…LLEATAELLE (178 aa). GTP contacts are provided by residues 167–174, 192–196, 214–217, 284–287, and 319–321; these read GFPSVGKS, FTTIV, DLPG, NKMD, and SGI. Positions 174 and 194 each coordinate Mg(2+). The 79-residue stretch at 359–437 folds into the OCT domain; the sequence is GFNPDEPEFA…IGKFEFEFVD (79 aa).

Belongs to the TRAFAC class OBG-HflX-like GTPase superfamily. OBG GTPase family. In terms of assembly, monomer. The cofactor is Mg(2+).

Its subcellular location is the cytoplasm. Functionally, an essential GTPase which binds GTP, GDP and possibly (p)ppGpp with moderate affinity, with high nucleotide exchange rates and a fairly low GTP hydrolysis rate. Plays a role in control of the cell cycle, stress response, ribosome biogenesis and in those bacteria that undergo differentiation, in morphogenesis control. The polypeptide is GTPase Obg (Streptococcus suis (strain 05ZYH33)).